Consider the following 262-residue polypeptide: 1-(5-phosphoribosyl)-5-[(5-phosphoribosylamino)methylideneamino] imidazole-4-carboxamide isomerase (262 aa).

D8 serves as the catalytic Proton acceptor. D130 acts as the Proton donor in catalysis.

The protein belongs to the HisA/HisF family.

The protein resides in the cytoplasm. The enzyme catalyses 1-(5-phospho-beta-D-ribosyl)-5-[(5-phospho-beta-D-ribosylamino)methylideneamino]imidazole-4-carboxamide = 5-[(5-phospho-1-deoxy-D-ribulos-1-ylimino)methylamino]-1-(5-phospho-beta-D-ribosyl)imidazole-4-carboxamide. It functions in the pathway amino-acid biosynthesis; L-histidine biosynthesis; L-histidine from 5-phospho-alpha-D-ribose 1-diphosphate: step 4/9. This Chloroherpeton thalassium (strain ATCC 35110 / GB-78) protein is 1-(5-phosphoribosyl)-5-[(5-phosphoribosylamino)methylideneamino] imidazole-4-carboxamide isomerase.